A 341-amino-acid chain; its full sequence is Probable electron transfer flavoprotein subunit alpha, mitochondrial (341 aa).

285 to 313 (LYIAVGIDGAIQHLAGIKDSKVIAAINRD) contacts FAD.

Belongs to the ETF alpha-subunit/FixB family. In terms of assembly, heterodimer of an alpha and a beta subunit. FAD is required as a cofactor.

The protein localises to the mitochondrion matrix. Its function is as follows. The electron transfer flavoprotein serves as a specific electron acceptor for several dehydrogenases, including five acyl-CoA dehydrogenases, glutaryl-CoA and sarcosine dehydrogenase. It transfers the electrons to the main mitochondrial respiratory chain via ETF-ubiquinone oxidoreductase (ETF dehydrogenase). In Schizosaccharomyces pombe (strain 972 / ATCC 24843) (Fission yeast), this protein is Probable electron transfer flavoprotein subunit alpha, mitochondrial.